The sequence spans 580 residues: Arginine--tRNA ligase (580 aa).

A 'HIGH' region motif is present at residues 123-133 (PNLAKEMHVGH).

It belongs to the class-I aminoacyl-tRNA synthetase family. As to quaternary structure, monomer.

It localises to the cytoplasm. The catalysed reaction is tRNA(Arg) + L-arginine + ATP = L-arginyl-tRNA(Arg) + AMP + diphosphate. This Pseudoalteromonas translucida (strain TAC 125) protein is Arginine--tRNA ligase.